Consider the following 387-residue polypeptide: Exodeoxyribonuclease 7 large subunit (387 aa).

Belongs to the XseA family. In terms of assembly, heterooligomer composed of large and small subunits.

Its subcellular location is the cytoplasm. It catalyses the reaction Exonucleolytic cleavage in either 5'- to 3'- or 3'- to 5'-direction to yield nucleoside 5'-phosphates.. In terms of biological role, bidirectionally degrades single-stranded DNA into large acid-insoluble oligonucleotides, which are then degraded further into small acid-soluble oligonucleotides. This chain is Exodeoxyribonuclease 7 large subunit, found in Parasynechococcus marenigrum (strain WH8102).